Here is a 352-residue protein sequence, read N- to C-terminus: tRNA-specific 2-thiouridylase MnmA (352 aa).

ATP contacts are provided by residues 7–14 (GLSGGVDS) and leucine 33. Catalysis depends on cysteine 94, which acts as the Nucleophile. Cysteine 94 and cysteine 193 are disulfide-bonded. Position 119 (glycine 119) interacts with ATP. Residues 143 to 145 (KDQ) form an interaction with tRNA region. Catalysis depends on cysteine 193, which acts as the Cysteine persulfide intermediate. Residues 298–299 (RY) are interaction with tRNA.

Belongs to the MnmA/TRMU family.

The protein resides in the cytoplasm. The enzyme catalyses S-sulfanyl-L-cysteinyl-[protein] + uridine(34) in tRNA + AH2 + ATP = 2-thiouridine(34) in tRNA + L-cysteinyl-[protein] + A + AMP + diphosphate + H(+). In terms of biological role, catalyzes the 2-thiolation of uridine at the wobble position (U34) of tRNA, leading to the formation of s(2)U34. The protein is tRNA-specific 2-thiouridylase MnmA of Trichormus variabilis (strain ATCC 29413 / PCC 7937) (Anabaena variabilis).